Consider the following 131-residue polypeptide: Small ribosomal subunit protein uS8 (131 aa).

This sequence belongs to the universal ribosomal protein uS8 family. Part of the 30S ribosomal subunit. Contacts proteins S5 and S12.

Its function is as follows. One of the primary rRNA binding proteins, it binds directly to 16S rRNA central domain where it helps coordinate assembly of the platform of the 30S subunit. The protein is Small ribosomal subunit protein uS8 of Verminephrobacter eiseniae (strain EF01-2).